The following is a 121-amino-acid chain: Large ribosomal subunit protein bL12 (121 aa).

This sequence belongs to the bacterial ribosomal protein bL12 family. Homodimer. Part of the ribosomal stalk of the 50S ribosomal subunit. Forms a multimeric L10(L12)X complex, where L10 forms an elongated spine to which 2 to 4 L12 dimers bind in a sequential fashion. Binds GTP-bound translation factors.

In terms of biological role, forms part of the ribosomal stalk which helps the ribosome interact with GTP-bound translation factors. Is thus essential for accurate translation. The sequence is that of Large ribosomal subunit protein bL12 from Shigella sonnei (strain Ss046).